Reading from the N-terminus, the 665-residue chain is tRNA 5-methylaminomethyl-2-thiouridine biosynthesis bifunctional protein MnmC (665 aa).

The tRNA (mnm(5)s(2)U34)-methyltransferase stretch occupies residues 1–235 (MTITRHAQID…KWEVLRGTFI (235 aa)). The tract at residues 266-665 (IGAGLAGCAT…RGKGKQTVGH (400 aa)) is FAD-dependent cmnm(5)s(2)U34 oxidoreductase.

The protein in the N-terminal section; belongs to the methyltransferase superfamily. tRNA (mnm(5)s(2)U34)-methyltransferase family. It in the C-terminal section; belongs to the DAO family. It depends on FAD as a cofactor.

Its subcellular location is the cytoplasm. It carries out the reaction 5-aminomethyl-2-thiouridine(34) in tRNA + S-adenosyl-L-methionine = 5-methylaminomethyl-2-thiouridine(34) in tRNA + S-adenosyl-L-homocysteine + H(+). Catalyzes the last two steps in the biosynthesis of 5-methylaminomethyl-2-thiouridine (mnm(5)s(2)U) at the wobble position (U34) in tRNA. Catalyzes the FAD-dependent demodification of cmnm(5)s(2)U34 to nm(5)s(2)U34, followed by the transfer of a methyl group from S-adenosyl-L-methionine to nm(5)s(2)U34, to form mnm(5)s(2)U34. The protein is tRNA 5-methylaminomethyl-2-thiouridine biosynthesis bifunctional protein MnmC of Pseudomonas syringae pv. syringae (strain B728a).